The sequence spans 88 residues: CRISPR-associated endoribonuclease Cas2 2 (88 aa).

Mg(2+) is bound at residue aspartate 8.

This sequence belongs to the CRISPR-associated endoribonuclease Cas2 protein family. In terms of assembly, homodimer, forms a heterotetramer with a Cas1 homodimer. It depends on Mg(2+) as a cofactor.

CRISPR (clustered regularly interspaced short palindromic repeat), is an adaptive immune system that provides protection against mobile genetic elements (viruses, transposable elements and conjugative plasmids). CRISPR clusters contain sequences complementary to antecedent mobile elements and target invading nucleic acids. CRISPR clusters are transcribed and processed into CRISPR RNA (crRNA). Functions as a ssRNA-specific endoribonuclease. Involved in the integration of spacer DNA into the CRISPR cassette. The sequence is that of CRISPR-associated endoribonuclease Cas2 2 (cas22) from Saccharolobus solfataricus (strain ATCC 35092 / DSM 1617 / JCM 11322 / P2) (Sulfolobus solfataricus).